The primary structure comprises 317 residues: Heme-binding protein HMX1 (317 aa).

The Cytoplasmic portion of the chain corresponds to 1–289; sequence MEDSSNTIIP…FNKDSATRRA (289 aa). The helical; Anchor for type IV membrane protein transmembrane segment at 290–310 threads the bilayer; it reads LHTVMLLVLSIIAIWVLYFLV.

Heme is required as a cofactor.

Its subcellular location is the endoplasmic reticulum membrane. Plays an important role in the degradation of heme under conditions of iron deprivation. This chain is Heme-binding protein HMX1 (HMX1), found in Saccharomyces cerevisiae (strain ATCC 204508 / S288c) (Baker's yeast).